The sequence spans 505 residues: Alpha-internexin (505 aa).

Residues 1–87 (MSFGSEHYLC…SQAAARTNEY (87 aa)) form a head region. Ser72 bears the Phosphoserine mark. Positions 88-129 (KIIRTNEKEQLQGLNDRFAVFIEKVHQLETQNRALEAELAAL) are coil 1A. One can recognise an IF rod domain in the interval 94–407 (EKEQLQGLND…KLLEGEETRF (314 aa)). The interval 130–142 (RQRHAEPSRVGEL) is linker 1. The coil 1B stretch occupies residues 143–238 (FQRELRELRA…QVHDEEVAEL (96 aa)). At Ser219 the chain carries Phosphoserine. Positions 239–262 (LATLQASSQAAAEVDVAVAKPDLT) are linker 2. The interval 263–408 (SALREIRAQY…LLEGEETRFS (146 aa)) is coil 2. Lys290 carries the N6-acetyllysine modification. Residues Ser335, Ser474, and Ser502 each carry the phosphoserine modification. The tail stretch occupies residues 409-505 (TSGLSISGLN…EITTSSSQKM (97 aa)). The interval 438–505 (KVSSAGLSLK…EITTSSSQKM (68 aa)) is disordered. The span at 495–505 (EEITTSSSQKM) shows a compositional bias: low complexity.

It belongs to the intermediate filament family. Forms homodimers (in vitro). Forms heterodimers with NEFL, NEFM or NEFH (in vitro). In terms of processing, O-glycosylated. Expressed in the dorsal root ganglion neurons (at protein level).

In terms of biological role, class-IV neuronal intermediate filament that is able to self-assemble. It is involved in the morphogenesis of neurons. It may form an independent structural network without the involvement of other neurofilaments or it may cooperate with NEFL to form the filamentous backbone to which NEFM and NEFH attach to form the cross-bridges. May also cooperate with the neuronal intermediate filament protein PRPH to form filamentous networks. The sequence is that of Alpha-internexin (Ina) from Rattus norvegicus (Rat).